A 162-amino-acid polypeptide reads, in one-letter code: Phosphopantetheine adenylyltransferase (162 aa).

S9 provides a ligand contact to substrate. ATP is bound by residues 9–10 (SF) and H17. Residues K41, T73, and R87 each contribute to the substrate site. ATP is bound by residues 88-90 (GLR), E98, and 123-129 (YSFISSS).

It belongs to the bacterial CoaD family. In terms of assembly, homohexamer. Mg(2+) is required as a cofactor.

The protein localises to the cytoplasm. The enzyme catalyses (R)-4'-phosphopantetheine + ATP + H(+) = 3'-dephospho-CoA + diphosphate. It functions in the pathway cofactor biosynthesis; coenzyme A biosynthesis; CoA from (R)-pantothenate: step 4/5. Functionally, reversibly transfers an adenylyl group from ATP to 4'-phosphopantetheine, yielding dephospho-CoA (dPCoA) and pyrophosphate. This Carboxydothermus hydrogenoformans (strain ATCC BAA-161 / DSM 6008 / Z-2901) protein is Phosphopantetheine adenylyltransferase.